Here is a 336-residue protein sequence, read N- to C-terminus: Structure-specific endonuclease subunit SLX1 (336 aa).

The 84-residue stretch at 21–104 (SFYGVYLLQS…QHCHETRHIK (84 aa)) folds into the GIY-YIG domain. A disordered region spans residues 37–57 (FYIGSTPDPPRRLRQHNGDLK). An SLX1-type zinc finger spans residues 214-290 (CALCLEPIEQ…PATVNRCCSC (77 aa)).

Belongs to the SLX1 family. In terms of assembly, forms a heterodimer with SLX4. A divalent metal cation serves as cofactor.

It localises to the nucleus. In terms of biological role, catalytic subunit of the SLX1-SLX4 structure-specific endonuclease that resolves DNA secondary structures generated during DNA repair and recombination. Has endonuclease activity towards branched DNA substrates, introducing single-strand cuts in duplex DNA close to junctions with ss-DNA. The chain is Structure-specific endonuclease subunit SLX1 from Scheffersomyces stipitis (strain ATCC 58785 / CBS 6054 / NBRC 10063 / NRRL Y-11545) (Yeast).